We begin with the raw amino-acid sequence, 208 residues long: Superoxide dismutase [Mn] 2 (208 aa).

Positions 28, 83, 165, and 169 each coordinate Mn(2+).

The protein belongs to the iron/manganese superoxide dismutase family. As to quaternary structure, homodimer. Mn(2+) is required as a cofactor.

The enzyme catalyses 2 superoxide + 2 H(+) = H2O2 + O2. Destroys superoxide anion radicals which are normally produced within the cells and which are toxic to biological systems. The sequence is that of Superoxide dismutase [Mn] 2 (sodA2) from Bacillus anthracis.